Reading from the N-terminus, the 95-residue chain is Hiracin-JM79 immunity factor (95 aa).

Its function is as follows. Imparts immunity to bacteriocin hiracin-JM79 to naturally sensitive host strains. The chain is Hiracin-JM79 immunity factor from Enterococcus hirae.